Consider the following 71-residue polypeptide: Large ribosomal subunit protein bL31 (71 aa).

Zn(2+) contacts are provided by C16, C18, C37, and C40.

Belongs to the bacterial ribosomal protein bL31 family. Type A subfamily. As to quaternary structure, part of the 50S ribosomal subunit. Zn(2+) serves as cofactor.

In terms of biological role, binds the 23S rRNA. In Yersinia pseudotuberculosis serotype O:1b (strain IP 31758), this protein is Large ribosomal subunit protein bL31.